A 142-amino-acid polypeptide reads, in one-letter code: Large ribosomal subunit protein uL11 (142 aa).

Belongs to the universal ribosomal protein uL11 family. As to quaternary structure, part of the ribosomal stalk of the 50S ribosomal subunit. Interacts with L10 and the large rRNA to form the base of the stalk. L10 forms an elongated spine to which L12 dimers bind in a sequential fashion forming a multimeric L10(L12)X complex. In terms of processing, one or more lysine residues are methylated.

Forms part of the ribosomal stalk which helps the ribosome interact with GTP-bound translation factors. The chain is Large ribosomal subunit protein uL11 from Buchnera aphidicola subsp. Acyrthosiphon pisum (strain APS) (Acyrthosiphon pisum symbiotic bacterium).